Reading from the N-terminus, the 371-residue chain is MEIGSSSTVAGGGQLSVPPGFRFHPTEEELLYYYLKKKVSYEPIDLDVIREVDLNKLEPWELKEKCRIGSGPQNEWYFFSHKDKKYPTGTRTNRATAAGFWKATGRDKSIHLNSSKKIGLRKTLVFYTGRAPHGQKTEWIMHEYRLDDSENEIQEDGWVVCRVFKKKNHFRGFHQEQEQDHHHHHQYISTNNDHDHHHHIDSNSNNHSPLILHPLDHHHHHHHIGRQIHMPLHEFANTLSHGSMHLPQLFSPDSAAAAAAAAASAQPFVSPINTTDIECSQNLLRLTSNNNYGGDWSFLDKLLTTGNMNQQQQQQVQNHQAKCFGDLSNNDNNDQADHLGNNNGGSSSSPVNQRFPFHYLGNDANLLKFPK.

Residues 17–166 (VPPGFRFHPT…GWVVCRVFKK (150 aa)) enclose the NAC domain. Residues 118–172 (IGLRKTLVFYTGRAPHGQKTEWIMHEYRLDDSENEIQEDGWVVCRVFKKKNHFRG) mediate DNA binding. Disordered stretches follow at residues 176–213 (EQEQ…LILH) and 316–355 (VQNH…NQRF). The segment covering 192-201 (NDHDHHHHID) has biased composition (basic and acidic residues). 2 stretches are compositionally biased toward low complexity: residues 202–213 (SNSNNHSPLILH) and 340–349 (GNNNGGSSSS).

As to expression, accumulates in maturing root cap cells, in both COL and LRC cells.

It is found in the nucleus. Transcription regulator. Together with BRN1 and BRN2, regulates cellular maturation of root cap. Represses stem cell-like divisions in the root cap daughter cells, and thus promotes daughter cell fate. Inhibits expression of its positive regulator FEZ in a feedback loop for controlled switches in cell division plane. Promotes the expression of genes involved in secondary cell walls (SCW) biosynthesis. This Arabidopsis thaliana (Mouse-ear cress) protein is Protein SOMBRERO (SMB).